The primary structure comprises 522 residues: Amphoterin-induced protein 2 (522 aa).

A signal peptide spans Met1–Gly39. The 29-residue stretch at Val40–Arg68 folds into the LRRNT domain. Topologically, residues Val40–Thr398 are extracellular. Intrachain disulfides connect Cys41–Cys47 and Cys45–Cys54. N-linked (GlcNAc...) asparagine glycosylation is present at Asn58. LRR repeat units follow at residues Leu69–Val90, Lys94–Thr115, Asn118–Glu139, Val142–Gly163, Gln166–Gly187, and Glu193–Leu214. N-linked (GlcNAc...) asparagine glycosylation occurs at Asn104. In terms of domain architecture, LRRCT spans Asn228–Asp284. Cystine bridges form between Cys232/Cys260 and Cys234/Cys282. Residues Asn281, Asn288, Asn345, Asn373, Asn381, and Asn384 are each glycosylated (N-linked (GlcNAc...) asparagine). Residues Gly289–Thr379 form the Ig-like C2-type domain. Residues Cys310 and Cys363 are joined by a disulfide bond. Residues Ala399–Leu419 form a helical membrane-spanning segment. Topologically, residues Thr420–Thr522 are cytoplasmic. Residues Arg501 to Thr522 form a disordered region.

The protein belongs to the immunoglobulin superfamily. AMIGO family. Binds itself as well as AMIGO1 and AMIGO3. In terms of tissue distribution, highest levels in breast, ovary, cervix, and uterus. Lower levels in lung, colon, and rectum. Differentially expressed in 56% of thyroid, 57% of pancreatic and 45% of stomach cancers.

It localises to the cell membrane. Its subcellular location is the nucleus. Required for depolarization-dependent survival of cultured cerebellar granule neurons. May mediate homophilic as well as heterophilic cell-cell interaction with AMIGO1 or AMIGO3. May contribute to signal transduction through its intracellular domain. May be required for tumorigenesis of a subset of gastric adenocarcinomas. The protein is Amphoterin-induced protein 2 of Homo sapiens (Human).